A 328-amino-acid chain; its full sequence is D-cysteine desulfhydrase (328 aa).

Position 51 is an N6-(pyridoxal phosphate)lysine (Lys51).

It belongs to the ACC deaminase/D-cysteine desulfhydrase family. Homodimer. The cofactor is pyridoxal 5'-phosphate.

It catalyses the reaction D-cysteine + H2O = hydrogen sulfide + pyruvate + NH4(+) + H(+). In terms of biological role, catalyzes the alpha,beta-elimination reaction of D-cysteine and of several D-cysteine derivatives. It could be a defense mechanism against D-cysteine. This chain is D-cysteine desulfhydrase, found in Escherichia coli O9:H4 (strain HS).